Here is a 287-residue protein sequence, read N- to C-terminus: CBK1 kinase activator protein MOB2 (287 aa).

The tract at residues 1 to 89 (MSFFNFKAFG…QQQEASERSE (89 aa)) is disordered. A Phosphotyrosine modification is found at Y33. Positions 34-44 (SSPHSSNSRLS) are enriched in low complexity. Residues 45–56 (LRNKHHSPKRHS) are compositionally biased toward basic residues. Phosphoserine is present on S59. Low complexity predominate over residues 63-83 (QKSTPQSQQLTSTTPQSQQQE). T76 carries the post-translational modification Phosphothreonine.

It belongs to the MOB1/phocein family. As to quaternary structure, interacts with protein kinase CBK1 to form the RAM CBK1-MOB2 kinase complex.

The protein resides in the nucleus. The protein localises to the cytoplasm. In terms of biological role, functions as an activator subunit for the CBK1 protein kinase. Part of the regulation of ACE2 activity and cellular morphogenesis (RAM) signaling network. Required for coordinating polarized cell growth during interphase with the onset of mitosis. Required for mother/daughter cell separation after cytokinesis. Also has a role in the prevention of nuclear export of ACE2 from the daughter cell nucleus after mitotic exit. It coordinates ACE2-dependent transcription with mitotic exit network activation. This is CBK1 kinase activator protein MOB2 (MOB2) from Saccharomyces cerevisiae (strain ATCC 204508 / S288c) (Baker's yeast).